A 223-amino-acid chain; its full sequence is Gastrula zinc finger protein XlCGF52.1 (223 aa).

C2H2-type zinc fingers lie at residues 6–27 (FTCP…TEDH), 33–55 (FTCM…QRVH), 61–83 (YTCT…ISTH), 89–111 (FPCT…QRIH), 117–139 (FQCL…QRSH), 145–167 (YACS…ERIH), 173–195 (YECN…QKIH), and 201–223 (FTCT…QKIH).

It belongs to the krueppel C2H2-type zinc-finger protein family.

It localises to the nucleus. May be involved in transcriptional regulation. In Xenopus laevis (African clawed frog), this protein is Gastrula zinc finger protein XlCGF52.1.